Here is a 212-residue protein sequence, read N- to C-terminus: Peptide methionine sulfoxide reductase MsrA (212 aa).

Cys52 is a catalytic residue.

Belongs to the MsrA Met sulfoxide reductase family.

It catalyses the reaction L-methionyl-[protein] + [thioredoxin]-disulfide + H2O = L-methionyl-(S)-S-oxide-[protein] + [thioredoxin]-dithiol. The enzyme catalyses [thioredoxin]-disulfide + L-methionine + H2O = L-methionine (S)-S-oxide + [thioredoxin]-dithiol. In terms of biological role, has an important function as a repair enzyme for proteins that have been inactivated by oxidation. Catalyzes the reversible oxidation-reduction of methionine sulfoxide in proteins to methionine. In Salmonella paratyphi B (strain ATCC BAA-1250 / SPB7), this protein is Peptide methionine sulfoxide reductase MsrA.